A 271-amino-acid polypeptide reads, in one-letter code: Chymotrypsin-like elastase family member 2A (271 aa).

A signal peptide spans 1–16; sequence MIRTLLLSALVAGALS. Positions 17–30 are cleaved as a propeptide — activation peptide; that stretch reads CGYPTYEVQHDVSR. In terms of domain architecture, Peptidase S1 spans 31-269; sequence VVGGQEASPN…YIDWINSVIA (239 aa). Cys60 and Cys76 are disulfide-bonded. Residues His75 and Asp123 each act as charge relay system in the active site. 3 disulfide bridges follow: Cys157-Cys224, Cys188-Cys204, and Cys214-Cys245. Residue Ser218 is the Charge relay system of the active site.

This sequence belongs to the peptidase S1 family. Elastase subfamily. Interacts with CPA1. Interacts with SERPINA1. In terms of tissue distribution, pancreas.

Its subcellular location is the secreted. It catalyses the reaction Preferential cleavage: Leu-|-Xaa, Met-|-Xaa and Phe-|-Xaa. Hydrolyzes elastin.. Functionally, elastase that enhances insulin signaling and might have a physiologic role in cellular glucose metabolism. Circulates in plasma and reduces platelet hyperactivation, triggers both insulin secretion and degradation, and increases insulin sensitivity. The sequence is that of Chymotrypsin-like elastase family member 2A (Cela2a) from Rattus norvegicus (Rat).